Reading from the N-terminus, the 227-residue chain is PKHD-type hydroxylase Mfla_2317 (227 aa).

The 101-residue stretch at 78 to 178 (KVFPPLFNRY…RVSSFFWMQS (101 aa)) folds into the Fe2OG dioxygenase domain. Histidine 96, aspartate 98, and histidine 159 together coordinate Fe cation. 2-oxoglutarate is bound at residue arginine 169.

The cofactor is Fe(2+). Requires L-ascorbate as cofactor.

This Methylobacillus flagellatus (strain ATCC 51484 / DSM 6875 / VKM B-1610 / KT) protein is PKHD-type hydroxylase Mfla_2317.